A 434-amino-acid polypeptide reads, in one-letter code: Phosphomethylpyrimidine synthase 2 (434 aa).

Substrate is bound by residues Met-94, Tyr-123, His-162, 184–186 (SRG), 225–228 (NAMR), and Glu-264. His-268 contacts Zn(2+). Residue Tyr-291 coordinates substrate. His-332 provides a ligand contact to Zn(2+). Residues Cys-408, Cys-411, and Cys-415 each coordinate [4Fe-4S] cluster.

Belongs to the ThiC family. It depends on [4Fe-4S] cluster as a cofactor.

The catalysed reaction is 5-amino-1-(5-phospho-beta-D-ribosyl)imidazole + S-adenosyl-L-methionine = 4-amino-2-methyl-5-(phosphooxymethyl)pyrimidine + CO + 5'-deoxyadenosine + formate + L-methionine + 3 H(+). It functions in the pathway cofactor biosynthesis; thiamine diphosphate biosynthesis. Catalyzes the synthesis of the hydroxymethylpyrimidine phosphate (HMP-P) moiety of thiamine from aminoimidazole ribotide (AIR) in a radical S-adenosyl-L-methionine (SAM)-dependent reaction. This is Phosphomethylpyrimidine synthase 2 from Methanosphaera stadtmanae (strain ATCC 43021 / DSM 3091 / JCM 11832 / MCB-3).